A 298-amino-acid polypeptide reads, in one-letter code: GTP cyclohydrolase FolE2 (298 aa).

The protein belongs to the GTP cyclohydrolase IV family.

It carries out the reaction GTP + H2O = 7,8-dihydroneopterin 3'-triphosphate + formate + H(+). Its pathway is cofactor biosynthesis; 7,8-dihydroneopterin triphosphate biosynthesis; 7,8-dihydroneopterin triphosphate from GTP: step 1/1. Its function is as follows. Converts GTP to 7,8-dihydroneopterin triphosphate. This chain is GTP cyclohydrolase FolE2, found in Pseudomonas aeruginosa (strain LESB58).